The following is a 100-amino-acid chain: Urease subunit gamma (100 aa).

It belongs to the urease gamma subunit family. Heterotrimer of UreA (gamma), UreB (beta) and UreC (alpha) subunits. Three heterotrimers associate to form the active enzyme.

The protein resides in the cytoplasm. It carries out the reaction urea + 2 H2O + H(+) = hydrogencarbonate + 2 NH4(+). Its pathway is nitrogen metabolism; urea degradation; CO(2) and NH(3) from urea (urease route): step 1/1. The protein is Urease subunit gamma of Rhodopseudomonas palustris (strain BisB5).